Consider the following 166-residue polypeptide: Lutropin subunit beta (166 aa).

A signal peptide spans Met-1 to Gly-21. Cystine bridges form between Cys-56/Cys-104, Cys-70/Cys-119, Cys-73/Cys-157, Cys-81/Cys-135, Cys-85/Cys-137, and Cys-140/Cys-147. A glycan (N-linked (GlcNAc...) asparagine) is linked at Asn-60.

The protein belongs to the glycoprotein hormones subunit beta family. As to quaternary structure, heterodimer of a common alpha chain and a unique beta chain which confers biological specificity to thyrotropin, lutropin, follitropin and gonadotropin.

It localises to the secreted. Functionally, promotes spermatogenesis and ovulation by stimulating the testes and ovaries to synthesize steroids. The sequence is that of Lutropin subunit beta (LHB) from Coturnix japonica (Japanese quail).